A 407-amino-acid chain; its full sequence is NADH dehydrogenase [ubiquinone] 1 alpha subcomplex subunit 10, mitochondrial (407 aa).

The transit peptide at 1 to 60 (MTAVFRVGLVRLVSRATQSPNLLQAQTNALPAAFQQRCSISGKTMRGGPRVPKAAPYPYK) directs the protein to the mitochondrion.

Belongs to the complex I NDUFA10 subunit family. In terms of assembly, complex I is composed of 45 different subunits. This a component of the hydrophobic protein fraction. Forms a complex including sicily, ND-42 and Hsp83; the complex is necessary to chaperone ND-42 in the cytoplasm before mitochondrial import; the interaction between sicily and ND-42 is direct and occurs preferably between the unprocessed forms in the cytoplasm. FAD serves as cofactor. As to expression, expressed in muscles (at protein level).

The protein resides in the mitochondrion matrix. It localises to the cytoplasm. Functionally, accessory subunit of the mitochondrial membrane respiratory chain NADH dehydrogenase (Complex I), that is believed not to be involved in catalysis. Complex I functions in the transfer of electrons from NADH to the respiratory chain. The immediate electron acceptor for the enzyme is believed to be ubiquinone. This chain is NADH dehydrogenase [ubiquinone] 1 alpha subcomplex subunit 10, mitochondrial, found in Drosophila melanogaster (Fruit fly).